Consider the following 44-residue polypeptide: Conotoxin S5.1 (44 aa).

Post-translationally, contains 3 disulfide bonds. Expressed by the venom duct.

The protein resides in the secreted. In Conus striatus (Striated cone), this protein is Conotoxin S5.1.